A 163-amino-acid chain; its full sequence is Bacterial microcompartment assembly protein PduM (163 aa).

It belongs to the PduM family. Interacts with shell protein PduK.

It is found in the bacterial microcompartment. The protein operates within polyol metabolism; 1,2-propanediol degradation. Functionally, plays an essential role in assembly and/or stability of the bacterial microcompartment (BMC) dedicated to 1,2-propanediol (1,2-PD) degradation. Overexpression impairs BMC formation. The 1,2-PD-specific bacterial microcompartment (BMC) concentrates low levels of 1,2-PD catabolic enzymes, concentrates volatile reaction intermediates thus enhancing pathway flux and keeps the level of toxic, mutagenic propionaldehyde low. In Salmonella typhimurium (strain LT2 / SGSC1412 / ATCC 700720), this protein is Bacterial microcompartment assembly protein PduM.